A 439-amino-acid chain; its full sequence is Acyl-coenzyme A thioesterase 10, mitochondrial (439 aa).

The transit peptide at 1 to 21 (MKRAAMRLWTLNKGLLTHGRG) directs the protein to the mitochondrion. HotDog ACOT-type domains follow at residues 85-209 (SYIE…QDSE) and 289-401 (EDTK…EKEV).

It belongs to the acyl coenzyme A hydrolase family.

It localises to the mitochondrion. Catalyzes the hydrolysis of acyl-CoAs into free fatty acids and coenzyme A (CoASH), regulating their respective intracellular levels. Active on long chain acyl-CoAs. The protein is Acyl-coenzyme A thioesterase 10, mitochondrial of Mus musculus (Mouse).